The sequence spans 107 residues: Phosphoribosyl-ATP pyrophosphatase (107 aa).

Belongs to the PRA-PH family.

Its subcellular location is the cytoplasm. The catalysed reaction is 1-(5-phospho-beta-D-ribosyl)-ATP + H2O = 1-(5-phospho-beta-D-ribosyl)-5'-AMP + diphosphate + H(+). Its pathway is amino-acid biosynthesis; L-histidine biosynthesis; L-histidine from 5-phospho-alpha-D-ribose 1-diphosphate: step 2/9. In Sinorhizobium fredii (strain NBRC 101917 / NGR234), this protein is Phosphoribosyl-ATP pyrophosphatase.